The chain runs to 36 residues: Putative DNA-binding protein inhibitor ID-2B (36 aa).

This chain is Putative DNA-binding protein inhibitor ID-2B (ID2B), found in Homo sapiens (Human).